The primary structure comprises 97 residues: Protein Vpr (97 aa).

The interval 1–42 (MEQAPEDQGPQREPHNEWTLELLEELKREAVRHFPRPWLHGL) is homooligomerization. Phosphoserine; by host is present on residues Ser-79, Ser-95, and Ser-97.

It belongs to the HIV-1 VPR protein family. Homooligomer, may form homodimer. Interacts with p6-gag region of the Pr55 Gag precursor protein through a (Leu-X-X)4 motif near the C-terminus of the P6gag protein. Interacts with host UNG. May interact with host RAD23A/HHR23A. Interacts with host VPRBP/DCAF1, leading to hijack the CUL4A-RBX1-DDB1-DCAF1/VPRBP complex, mediating ubiquitination of host proteins such as TERT and ZGPAT and arrest of the cell cycle in G2 phase. Post-translationally, phosphorylated on several residues by host. These phosphorylations regulate VPR activity for the nuclear import of the HIV-1 pre-integration complex.

It localises to the virion. The protein resides in the host nucleus. The protein localises to the host extracellular space. Functionally, during virus replication, may deplete host UNG protein, and incude G2-M cell cycle arrest. Acts by targeting specific host proteins for degradation by the 26S proteasome, through association with the cellular CUL4A-DDB1 E3 ligase complex by direct interaction with host VPRPB/DCAF-1. Cell cycle arrest reportedly occurs within hours of infection and is not blocked by antiviral agents, suggesting that it is initiated by the VPR carried into the virion. Additionally, VPR induces apoptosis in a cell cycle dependent manner suggesting that these two effects are mechanistically linked. Detected in the serum and cerebrospinal fluid of AIDS patient, VPR may also induce cell death to bystander cells. Its function is as follows. During virus entry, plays a role in the transport of the viral pre-integration (PIC) complex to the host nucleus. This function is crucial for viral infection of non-dividing macrophages. May act directly at the nuclear pore complex, by binding nucleoporins phenylalanine-glycine (FG)-repeat regions. In Human immunodeficiency virus type 1 group M subtype B (isolate YU-2) (HIV-1), this protein is Protein Vpr.